A 223-amino-acid polypeptide reads, in one-letter code: Transcription factor bHLH75 (223 aa).

Positions Phe58–Asp100 are disordered. One can recognise a bHLH domain in the interval Gln110–Leu160.

Homodimer. In terms of tissue distribution, expressed in leaves, stems, and flowers.

The protein localises to the nucleus. In Arabidopsis thaliana (Mouse-ear cress), this protein is Transcription factor bHLH75 (BHLH75).